The sequence spans 440 residues: DNA dC-&gt;dU-editing enzyme APOBEC-3 (440 aa).

CMP/dCMP-type deaminase domains are found at residues 49–165 (GRKD…AQVA) and 249–368 (EEEF…LCSL). Residue His82 coordinates Zn(2+). The Proton donor role is filled by Glu84. The Zn(2+) site is built by Cys116, Cys119, His299, Cys327, and Cys330.

Belongs to the cytidine and deoxycytidylate deaminase family. Homodimer. Interacts with mouse mammary tumor virus (MMTV) nucleocapsid protein p14. It depends on Zn(2+) as a cofactor. Expressed in spleen, node and lung.

Its subcellular location is the cytoplasm. It carries out the reaction a 2'-deoxycytidine in single-stranded DNA + H2O + H(+) = a 2'-deoxyuridine in single-stranded DNA + NH4(+). In terms of biological role, DNA deaminase (cytidine deaminase) which acts as an inhibitor of retrovirus replication and retrotransposon mobility via deaminase-dependent and -independent mechanisms. Selectively targets single-stranded DNA and does not deaminate double-stranded DNA or single- or double-stranded RNA. Exhibits antiviral activity against HIV-1, simian immunodeficiency viruses (SIVs), mouse mammary tumor virus (MMTV) and friend murine leukemia virus (FrMLV) and may inhibit the mobility of LTR retrotransposons. The sequence is that of DNA dC-&gt;dU-editing enzyme APOBEC-3 (Apobec3) from Mus musculus (Mouse).